The following is an 82-amino-acid chain: Small ribosomal subunit protein bS16 (82 aa).

Belongs to the bacterial ribosomal protein bS16 family.

This is Small ribosomal subunit protein bS16 from Vibrio campbellii (strain ATCC BAA-1116).